Here is a 278-residue protein sequence, read N- to C-terminus: HTH-type transcriptional activator RhaS (278 aa).

Residues 174–272 (NQLMAWLEDH…NWSPRDIRQG (99 aa)) form the HTH araC/xylS-type domain. 2 consecutive DNA-binding regions (H-T-H motif) follow at residues 191 to 212 (EAVA…KQHT) and 239 to 262 (VTEI…RREF).

As to quaternary structure, binds DNA as a dimer.

The protein resides in the cytoplasm. Its function is as follows. Activates expression of the rhaBAD and rhaT operons. This Salmonella arizonae (strain ATCC BAA-731 / CDC346-86 / RSK2980) protein is HTH-type transcriptional activator RhaS.